The chain runs to 263 residues: Small ribosomal subunit protein eS1 (263 aa).

Basic and acidic residues predominate over residues 235 to 254 (HGEGGGGKREAGDKSERPEG). The tract at residues 235–263 (HGEGGGGKREAGDKSERPEGYEPPVQESV) is disordered.

Belongs to the eukaryotic ribosomal protein eS1 family. In terms of assembly, component of the small ribosomal subunit. Mature ribosomes consist of a small (40S) and a large (60S) subunit. The 40S subunit contains about 33 different proteins and 1 molecule of RNA (18S). The 60S subunit contains about 49 different proteins and 3 molecules of RNA (28S, 5.8S and 5S).

Its subcellular location is the cytoplasm. The protein is Small ribosomal subunit protein eS1 of Bombyx mandarina (Wild silk moth).